The primary structure comprises 174 residues: MFIFIKHGDNQQFLANINCSVLLLLHYARRKVGLPKTETIDLCDETGTMKLFFLMKTPGDYANKFLTARNTYYVCKVERGAPGTRVESAYKAFVPLLKNPEPELIDALRTQCDLLERSRVKMLRIQEAKKVVPIESSVNLTSKSSGRSDEEGTTRRAPVLKTRADFVSRKDKHR.

The disordered stretch occupies residues 138 to 174 (VNLTSKSSGRSDEEGTTRRAPVLKTRADFVSRKDKHR). Residues 162 to 174 (TRADFVSRKDKHR) are compositionally biased toward basic and acidic residues.

This is an uncharacterized protein from Bos taurus (Bovine).